The primary structure comprises 211 residues: Bacteriorhodopsin (211 aa).

Residues 1 to 19 traverse the membrane as a helical segment; sequence IWLWLGTAGMFLGMLYFIA. At 20–33 the chain is on the cytoplasmic side; it reads RGWGETDSRRQKFY. The chain crosses the membrane as a helical span at residues 34-52; sequence IATILITAIAFVNYLAMAL. At 53–68 the chain is on the extracellular side; sequence GFGLTIVEFAGEEHPI. The helical transmembrane segment at 69-86 threads the bilayer; sequence YWARYSDWLFTTPLLLYD. Topologically, residues 87-97 are cytoplasmic; the sequence is LGLLAGADRNT. Residues 98–117 traverse the membrane as a helical segment; sequence ITSLVSLDVLMIGTGLVATL. Residues 118–130 lie on the Extracellular side of the membrane; it reads SAGSGVLSAGAER. A helical membrane pass occupies residues 131 to 150; it reads LVWWGISTAFLLVLLYFLFS. The Cytoplasmic portion of the chain corresponds to 151-168; the sequence is SLSGRVADLPSDTRSTFK. Residues 169–187 traverse the membrane as a helical segment; the sequence is TLRNLVTVVWLVYPVWWLI. The Extracellular segment spans residues 188–199; sequence GTEGIGLVGIGI. The chain crosses the membrane as a helical span at residues 200–211; that stretch reads ETAGFMVIDLTA.

This sequence belongs to the archaeal/bacterial/fungal opsin family.

It is found in the cell membrane. Its function is as follows. Light-driven proton pump. In Halobacterium halobium (strain port), this protein is Bacteriorhodopsin (bop).